A 665-amino-acid polypeptide reads, in one-letter code: Envelope glycoprotein (665 aa).

The first 31 residues, 1–31 (MESTTLSKPFKNQVNPWGPLIVLLILGRVNP), serve as a signal peptide directing secretion. Residues 32–267 (VALGNSPHQV…KITDSGPRVP (236 aa)) form a receptor-binding domain (RBD) region. Residues 32-605 (VALGNSPHQV…FNGSPWFTTL (574 aa)) lie on the Extracellular side of the membrane. N-linked (GlcNAc...) asparagine; by host glycosylation occurs at Asn-43. 5 disulfides stabilise this stretch: Cys-77–Cys-129, Cys-103–Cys-118, Cys-104–Cys-114, Cys-152–Cys-172, and Cys-164–Cys-177. A Zn(2+)-binding site is contributed by Asp-117. 2 N-linked (GlcNAc...) asparagine; by host glycosylation sites follow: Asn-199 and Asn-211. Cys-209 and Cys-215 are joined by a disulfide. Residues 266-307 (VPIGPNPVLSDQRPPSQPRSPPHSNSTPTETPLTLPEPPPAG) are disordered. Asn-324 carries N-linked (GlcNAc...) asparagine; by host glycosylation. Cystine bridges form between Cys-334-Cys-337, Cys-334-Cys-558, Cys-364-Cys-418, Cys-383-Cys-395, Cys-425-Cys-438, and Cys-550-Cys-557. Positions 334-337 (CWLC) match the CXXC motif. Residues Asn-356 and Asn-363 are each glycosylated (N-linked (GlcNAc...) asparagine; by host). N-linked (GlcNAc...) asparagine; by host glycans are attached at residues Asn-396, Asn-400, and Asn-432. Residues 470–490 (VSLTLALLLGGLTMGGIAAGI) are fusion peptide. Positions 505-532 (AAVHDDLKEVEKSITNLEKSLTSLSEVV) form a coiled coil. The interval 533 to 549 (LQNRRGLDLLFLKEGGL) is immunosuppression. The CX6CC motif lies at 550–558 (CAALKEECC). Residues 606-626 (ISTIMGPLIVLLLILLLGPCI) traverse the membrane as a helical segment. Cys-625 carries the S-palmitoyl cysteine; by host lipid modification. At 627–665 (LNRLVQFVKDRISVVQALVLTQQYHQLKSIDPEEMESRE) the chain is on the cytoplasmic side. A YXXL motif; contains endocytosis signal motif is present at residues 650–653 (YHQL).

The mature envelope protein (Env) consists of a trimer of SU-TM heterodimers attached by a labile interchain disulfide bond. Post-translationally, specific enzymatic cleavages in vivo yield mature proteins. Envelope glycoproteins are synthesized as an inactive precursor that is N-glycosylated and processed likely by host cell furin or by a furin-like protease in the Golgi to yield the mature SU and TM proteins. The cleavage site between SU and TM requires the minimal sequence [KR]-X-[KR]-R. The R-peptide is released from the C-terminus of the cytoplasmic tail of the TM protein upon particle formation as a result of proteolytic cleavage by the viral protease. Cleavage of this peptide is required for TM to become fusogenic. In terms of processing, the CXXC motif is highly conserved across a broad range of retroviral envelope proteins. It is thought to participate in the formation of a labile disulfide bond possibly with the CX6CC motif present in the transmembrane protein. Isomerization of the intersubunit disulfide bond to an SU intrachain disulfide bond is thought to occur upon receptor recognition in order to allow membrane fusion. The transmembrane protein is palmitoylated. Post-translationally, the R-peptide is palmitoylated.

It localises to the virion membrane. Its subcellular location is the host cell membrane. Functionally, the surface protein (SU) attaches the virus to the host cell by binding to its receptor. This interaction triggers the refolding of the transmembrane protein (TM) and is thought to activate its fusogenic potential by unmasking its fusion peptide. Fusion occurs at the host cell plasma membrane. The transmembrane protein (TM) acts as a class I viral fusion protein. Under the current model, the protein has at least 3 conformational states: pre-fusion native state, pre-hairpin intermediate state, and post-fusion hairpin state. During viral and target cell membrane fusion, the coiled coil regions (heptad repeats) assume a trimer-of-hairpins structure, positioning the fusion peptide in close proximity to the C-terminal region of the ectodomain. The formation of this structure appears to drive apposition and subsequent fusion of viral and target cell membranes. Membranes fusion leads to delivery of the nucleocapsid into the cytoplasm. In Radiation murine leukemia virus, this protein is Envelope glycoprotein (env).